The primary structure comprises 194 residues: Small ribosomal subunit protein eS7 (194 aa).

This sequence belongs to the eukaryotic ribosomal protein eS7 family.

The chain is Small ribosomal subunit protein eS7 (RpS7) from Drosophila yakuba (Fruit fly).